The following is a 683-amino-acid chain: Glycine--tRNA ligase beta subunit (683 aa).

This sequence belongs to the class-II aminoacyl-tRNA synthetase family. Tetramer of two alpha and two beta subunits.

The protein resides in the cytoplasm. It catalyses the reaction tRNA(Gly) + glycine + ATP = glycyl-tRNA(Gly) + AMP + diphosphate. The sequence is that of Glycine--tRNA ligase beta subunit from Pseudomonas putida (strain W619).